The chain runs to 597 residues: Probable translation initiation factor IF-2 (597 aa).

The 218-residue stretch at 4 to 221 (IRQPIIAVLG…LISGLAQKYL (218 aa)) folds into the tr-type G domain. The tract at residues 13 to 20 (GHVDHGKT) is G1. 13 to 20 (GHVDHGKT) is a GTP binding site. The segment at 38-42 (GITQH) is G2. The tract at residues 77–80 (DTPG) is G3. GTP is bound by residues 77–81 (DTPGH) and 131–134 (NKID). A G4 region spans residues 131 to 134 (NKID). The tract at residues 199–201 (SAK) is G5.

Belongs to the TRAFAC class translation factor GTPase superfamily. Classic translation factor GTPase family. IF-2 subfamily.

Its function is as follows. Function in general translation initiation by promoting the binding of the formylmethionine-tRNA to ribosomes. Seems to function along with eIF-2. The polypeptide is Probable translation initiation factor IF-2 (Thermococcus sibiricus (strain DSM 12597 / MM 739)).